The following is a 180-amino-acid chain: Large ribosomal subunit protein uL10 (180 aa).

It belongs to the universal ribosomal protein uL10 family. In terms of assembly, part of the ribosomal stalk of the 50S ribosomal subunit. The N-terminus interacts with L11 and the large rRNA to form the base of the stalk. The C-terminus forms an elongated spine to which L12 dimers bind in a sequential fashion forming a multimeric L10(L12)X complex.

Its function is as follows. Forms part of the ribosomal stalk, playing a central role in the interaction of the ribosome with GTP-bound translation factors. In Thermosipho africanus (strain TCF52B), this protein is Large ribosomal subunit protein uL10.